A 492-amino-acid polypeptide reads, in one-letter code: Transmembrane protein 39B (492 aa).

A disordered region spans residues 1–53 (MGGRRGPNRTSYYRNPLCEPGSSGASGGGHSSSASVSSVRSRSRTTSGTGLSS). An N-linked (GlcNAc...) asparagine glycan is attached at Asn-8. Low complexity predominate over residues 31–53 (SSSASVSSVRSRSRTTSGTGLSS). Helical transmembrane passes span 77 to 97 (SILF…VHYI), 115 to 135 (TSLN…IVLG), 153 to 175 (SLFR…GWSL), 185 to 205 (TYSF…IPFL), 288 to 308 (EVLV…VWFV), 322 to 342 (LFLL…LPAS), 421 to 441 (ILNI…YSLM), and 447 to 467 (HQTI…FKLL).

This sequence belongs to the TMEM39 family.

It is found in the endoplasmic reticulum membrane. May protect the cells against DNA damage caused by exposure to the cold-warming stress and facilitates tissue damage repair during the recovery phase. This chain is Transmembrane protein 39B, found in Rattus norvegicus (Rat).